Here is a 137-residue protein sequence, read N- to C-terminus: Ribosome-binding factor A (137 aa).

This sequence belongs to the RbfA family. In terms of assembly, monomer. Binds 30S ribosomal subunits, but not 50S ribosomal subunits or 70S ribosomes.

It localises to the cytoplasm. Functionally, one of several proteins that assist in the late maturation steps of the functional core of the 30S ribosomal subunit. Associates with free 30S ribosomal subunits (but not with 30S subunits that are part of 70S ribosomes or polysomes). Required for efficient processing of 16S rRNA. May interact with the 5'-terminal helix region of 16S rRNA. The polypeptide is Ribosome-binding factor A (Rhodopseudomonas palustris (strain TIE-1)).